Reading from the N-terminus, the 111-residue chain is Large ribosomal subunit protein uL22 (111 aa).

The protein belongs to the universal ribosomal protein uL22 family. In terms of assembly, part of the 50S ribosomal subunit.

Its function is as follows. This protein binds specifically to 23S rRNA; its binding is stimulated by other ribosomal proteins, e.g. L4, L17, and L20. It is important during the early stages of 50S assembly. It makes multiple contacts with different domains of the 23S rRNA in the assembled 50S subunit and ribosome. In terms of biological role, the globular domain of the protein is located near the polypeptide exit tunnel on the outside of the subunit, while an extended beta-hairpin is found that lines the wall of the exit tunnel in the center of the 70S ribosome. The chain is Large ribosomal subunit protein uL22 from Pelobacter propionicus (strain DSM 2379 / NBRC 103807 / OttBd1).